Here is a 118-residue protein sequence, read N- to C-terminus: Small ribosomal subunit protein uS13 (118 aa).

A disordered region spans residues 92 to 118 (RRGLPVRGQRTKTNARTRKGPRKPIKK).

This sequence belongs to the universal ribosomal protein uS13 family. Part of the 30S ribosomal subunit. Forms a loose heterodimer with protein S19. Forms two bridges to the 50S subunit in the 70S ribosome.

Located at the top of the head of the 30S subunit, it contacts several helices of the 16S rRNA. In the 70S ribosome it contacts the 23S rRNA (bridge B1a) and protein L5 of the 50S subunit (bridge B1b), connecting the 2 subunits; these bridges are implicated in subunit movement. Contacts the tRNAs in the A and P-sites. This chain is Small ribosomal subunit protein uS13, found in Pectobacterium carotovorum subsp. carotovorum (strain PC1).